The primary structure comprises 419 residues: Phospho-N-acetylmuramoyl-pentapeptide-transferase (419 aa).

10 helical membrane passes run Tyr-22–Gly-42, Thr-72–Ala-92, Leu-94–Phe-114, Ile-135–Val-155, Ala-210–Ala-230, Gly-238–Ser-258, Phe-266–Ile-286, Phe-303–Ile-323, Leu-327–Val-347, and Lys-396–Leu-416.

It belongs to the glycosyltransferase 4 family. MraY subfamily. The cofactor is Mg(2+).

Its subcellular location is the cell inner membrane. The catalysed reaction is UDP-N-acetyl-alpha-D-muramoyl-L-alanyl-gamma-D-glutamyl-meso-2,6-diaminopimeloyl-D-alanyl-D-alanine + di-trans,octa-cis-undecaprenyl phosphate = di-trans,octa-cis-undecaprenyl diphospho-N-acetyl-alpha-D-muramoyl-L-alanyl-D-glutamyl-meso-2,6-diaminopimeloyl-D-alanyl-D-alanine + UMP. Its pathway is cell wall biogenesis; peptidoglycan biosynthesis. Catalyzes the initial step of the lipid cycle reactions in the biosynthesis of the cell wall peptidoglycan: transfers peptidoglycan precursor phospho-MurNAc-pentapeptide from UDP-MurNAc-pentapeptide onto the lipid carrier undecaprenyl phosphate, yielding undecaprenyl-pyrophosphoryl-MurNAc-pentapeptide, known as lipid I. The sequence is that of Phospho-N-acetylmuramoyl-pentapeptide-transferase from Parabacteroides distasonis (strain ATCC 8503 / DSM 20701 / CIP 104284 / JCM 5825 / NCTC 11152).